The chain runs to 1495 residues: ABC transporter C family member 12 (1495 aa).

11 consecutive transmembrane segments (helical) span residues 38-58 (VMLVSHFVLLGLCFYRIWIIF), 76-96 (VLGLLACYCVVEPVLRLVMGI), 110-130 (FEVASLMVEAFAWFSMLVLIG), 146-166 (FGVLYVLVADAVLLDLVLPLK), 173-195 (ALYLFISSRCSQALFGILLLIYI), 303-323 (FWLAGIFKIGNDLSQFVGPVI), 337-357 (AWVGYVYAFIIFVGVTLGVLC), 420-440 (GLWSAPFRIIVSMILLYQQLG), 441-461 (VASLFGSLILFLLIPLQTLII), 528-548 (FILNSIPVVVTVVSFGVFVLL), and 558-578 (FTSLSLFAVLRFPLNMLPNLL). An ABC transmembrane type-1 1 domain is found at 303–583 (FWLAGIFKIG…LPNLLSQVVN (281 aa)). Residues 615-839 (ISIKNGYFSW…GILFKKLMEN (225 aa)) enclose the ABC transporter 1 domain. 650 to 657 (GGTGEGKT) serves as a coordination point for ATP. The next 5 membrane-spanning stretches (helical) occupy residues 907 to 927 (AVGGLWVVMILLACYLATEVL), 949 to 969 (PGFYIVVYALLGFGQVAVTFT), 1042 to 1062 (FALIGTVSTISLWAIMPLLIL), 1140 to 1160 (LETLGGVMIWLTATFAVLQNG), and 1166 to 1186 (AGFASTMGLLLSYTLNITSLL). Residues 914 to 1198 (VMILLACYLA…VLRQASRAEN (285 aa)) form the ABC transmembrane type-1 2 domain. The region spanning 1235–1469 (IKFEDVHLRY…DTSAFFRMVH (235 aa)) is the ABC transporter 2 domain. Residue 1269–1276 (GRTGAGKS) participates in ATP binding.

It belongs to the ABC transporter superfamily. ABCC family. Conjugate transporter (TC 3.A.1.208) subfamily. Ubiquitous.

It localises to the membrane. It carries out the reaction ATP + H2O + xenobioticSide 1 = ADP + phosphate + xenobioticSide 2.. Functionally, pump for glutathione S-conjugates. The chain is ABC transporter C family member 12 (ABCC12) from Arabidopsis thaliana (Mouse-ear cress).